Here is an 82-residue protein sequence, read N- to C-terminus: Small ribosomal subunit protein uS17 (82 aa).

This sequence belongs to the universal ribosomal protein uS17 family. As to quaternary structure, part of the 30S ribosomal subunit.

Functionally, one of the primary rRNA binding proteins, it binds specifically to the 5'-end of 16S ribosomal RNA. The chain is Small ribosomal subunit protein uS17 from Aeromonas hydrophila subsp. hydrophila (strain ATCC 7966 / DSM 30187 / BCRC 13018 / CCUG 14551 / JCM 1027 / KCTC 2358 / NCIMB 9240 / NCTC 8049).